The sequence spans 286 residues: Protein HEAT-STRESS-ASSOCIATED 32 (286 aa).

It belongs to the phosphosulfolactate synthase family.

Transactivator required, together with HSP101, for long-term acquired thermotolerance (LAT) maintenance, probably by regulating heat-inducible genes expression, thus being a cellular component of thermomemory. The protein is Protein HEAT-STRESS-ASSOCIATED 32 of Arabidopsis thaliana (Mouse-ear cress).